A 566-amino-acid polypeptide reads, in one-letter code: Urease subunit beta (566 aa).

In terms of domain architecture, Urease spans 129–566 (GGIDTHIHFI…VPMARRYFMF (438 aa)). Positions 134, 136, and 217 each coordinate Ni(2+). Lys217 carries the N6-carboxylysine modification. Substrate is bound at residue His219. Ni(2+) contacts are provided by His246 and His272. Residue His320 is the Proton donor of the active site. Position 360 (Asp360) interacts with Ni(2+).

The protein belongs to the metallo-dependent hydrolases superfamily. Urease alpha subunit family. Heterohexamer of 3 UreA (alpha) and 3 UreB (beta) subunits. Ni cation serves as cofactor. Carboxylation allows a single lysine to coordinate two nickel ions.

It localises to the cytoplasm. It catalyses the reaction urea + 2 H2O + H(+) = hydrogencarbonate + 2 NH4(+). It functions in the pathway nitrogen metabolism; urea degradation; CO(2) and NH(3) from urea (urease route): step 1/1. In Aliarcobacter butzleri (strain RM4018) (Arcobacter butzleri), this protein is Urease subunit beta.